A 202-amino-acid chain; its full sequence is Peptidyl-tRNA hydrolase (202 aa).

Tyrosine 14 serves as a coordination point for tRNA. The Proton acceptor role is filled by histidine 19. TRNA is bound by residues tyrosine 64, asparagine 66, and asparagine 112.

This sequence belongs to the PTH family. As to quaternary structure, monomer.

It localises to the cytoplasm. The catalysed reaction is an N-acyl-L-alpha-aminoacyl-tRNA + H2O = an N-acyl-L-amino acid + a tRNA + H(+). Functionally, hydrolyzes ribosome-free peptidyl-tRNAs (with 1 or more amino acids incorporated), which drop off the ribosome during protein synthesis, or as a result of ribosome stalling. In terms of biological role, catalyzes the release of premature peptidyl moieties from peptidyl-tRNA molecules trapped in stalled 50S ribosomal subunits, and thus maintains levels of free tRNAs and 50S ribosomes. The sequence is that of Peptidyl-tRNA hydrolase from Xanthobacter autotrophicus (strain ATCC BAA-1158 / Py2).